A 233-amino-acid chain; its full sequence is Uridylate kinase (233 aa).

ATP contacts are provided by residues 9 to 12 (KLSG), G51, and R55. Residues D69 and 130 to 137 (TGNPFFST) each bind UMP. Residues N158, Y164, and D167 each coordinate ATP.

It belongs to the UMP kinase family. As to quaternary structure, homohexamer.

The protein localises to the cytoplasm. The catalysed reaction is UMP + ATP = UDP + ADP. Its pathway is pyrimidine metabolism; CTP biosynthesis via de novo pathway; UDP from UMP (UMPK route): step 1/1. Inhibited by UTP. Catalyzes the reversible phosphorylation of UMP to UDP. This is Uridylate kinase from Thermus thermophilus (strain ATCC BAA-163 / DSM 7039 / HB27).